The primary structure comprises 129 residues: Urease subunit beta (129 aa).

Belongs to the urease beta subunit family. In terms of assembly, heterotrimer of UreA (gamma), UreB (beta) and UreC (alpha) subunits. Three heterotrimers associate to form the active enzyme.

The protein localises to the cytoplasm. It catalyses the reaction urea + 2 H2O + H(+) = hydrogencarbonate + 2 NH4(+). It functions in the pathway nitrogen metabolism; urea degradation; CO(2) and NH(3) from urea (urease route): step 1/1. The protein is Urease subunit beta of Photorhabdus laumondii subsp. laumondii (strain DSM 15139 / CIP 105565 / TT01) (Photorhabdus luminescens subsp. laumondii).